A 243-amino-acid polypeptide reads, in one-letter code: MSCVTRAPMSVPQTALQPNSYVNFDAQQTSSTLLPVEVIDSVMQYLPAHDVIQSSFASYPLTLIANKIIRARLSFLDEYSLRVFAKDVYTDSPICNLSARRGLYSLQYDGYSVFHLDPNNCSSIFQISFEDDEDLASFERYPGEFLAPHINVRIHVTLSRSSCDRHQADIFSCFQDPIRVRRDWLDSIKPGQPETLWFDQNTQHVIGLIVTRVDAAPGKYDLSVTSVIVQTEYLLSCLEKRVH.

Residues Gln-28–Leu-73 enclose the F-box domain.

Its pathway is protein modification; protein ubiquitination. In terms of biological role, probable substrate recognition component of a SCF (SKP1-CUL1-F-box protein) E3 ubiquitin-protein ligase complex that mediates the ubiquitination and subsequent proteasomal degradation of target proteins. The sequence is that of F-box protein pof15 (pof15) from Schizosaccharomyces pombe (strain 972 / ATCC 24843) (Fission yeast).